The sequence spans 423 residues: Histidine--tRNA ligase (423 aa).

The protein belongs to the class-II aminoacyl-tRNA synthetase family. As to quaternary structure, homodimer.

The protein resides in the cytoplasm. It carries out the reaction tRNA(His) + L-histidine + ATP = L-histidyl-tRNA(His) + AMP + diphosphate + H(+). The protein is Histidine--tRNA ligase of Shewanella loihica (strain ATCC BAA-1088 / PV-4).